A 228-amino-acid chain; its full sequence is Phosphoglycolate phosphatase (228 aa).

The Nucleophile role is filled by aspartate 12. Mg(2+)-binding residues include aspartate 12, aspartate 14, and aspartate 177.

It belongs to the HAD-like hydrolase superfamily. CbbY/CbbZ/Gph/YieH family. Requires Mg(2+) as cofactor.

The catalysed reaction is 2-phosphoglycolate + H2O = glycolate + phosphate. Its pathway is organic acid metabolism; glycolate biosynthesis; glycolate from 2-phosphoglycolate: step 1/1. Functionally, specifically catalyzes the dephosphorylation of 2-phosphoglycolate. Is involved in the dissimilation of the intracellular 2-phosphoglycolate formed during the DNA repair of 3'-phosphoglycolate ends, a major class of DNA lesions induced by oxidative stress. The protein is Phosphoglycolate phosphatase of Vibrio parahaemolyticus serotype O3:K6 (strain RIMD 2210633).